The primary structure comprises 196 residues: Large ribosomal subunit protein eL15 (196 aa).

The segment at 156–196 (HRGRAERGKTSAGRKGRGMRTRGRGTEKTRPSIRSHANQGK) is disordered. The span at 167-178 (AGRKGRGMRTRG) shows a compositional bias: basic residues.

It belongs to the eukaryotic ribosomal protein eL15 family.

This chain is Large ribosomal subunit protein eL15, found in Methanoregula boonei (strain DSM 21154 / JCM 14090 / 6A8).